We begin with the raw amino-acid sequence, 454 residues long: Cholesterol 7-desaturase nvd (454 aa).

A run of 2 helical transmembrane segments spans residues 13–33 (VLCP…LGAG) and 47–67 (TTLS…LWGW). The Rieske domain maps to 117–221 (WYRALDSHLL…SCELNGMVFV (105 aa)). Residues Cys158, His160, Cys178, and His181 each coordinate [2Fe-2S] cluster.

It belongs to the cholesterol 7-desaturase family. Requires [2Fe-2S] cluster as cofactor.

It localises to the membrane. It carries out the reaction cholesterol + NADPH + O2 + H(+) = 7-dehydrocholesterol + NADP(+) + 2 H2O. The catalysed reaction is cholesterol + NADH + O2 + H(+) = 7-dehydrocholesterol + NAD(+) + 2 H2O. It functions in the pathway steroid hormone biosynthesis; dafachronic acid biosynthesis. Functionally, catalyzes the production of 7-dehydrocholesterol (7-DHC or cholesta-5,7-dien-3beta-ol) by inserting a double bond (desaturating) at the C7-C8 single bond of cholesterol. This reaction is the first step in the synthesis of the steroid hormone Delta(7)-dafachronic acid. The chain is Cholesterol 7-desaturase nvd (nvd) from Xenopus laevis (African clawed frog).